The chain runs to 66 residues: Large ribosomal subunit protein bL33c (66 aa).

Belongs to the bacterial ribosomal protein bL33 family.

The protein localises to the plastid. The protein resides in the chloroplast. The chain is Large ribosomal subunit protein bL33c from Morus indica (Mulberry).